The sequence spans 348 residues: MSFVDEAKIHVKGGKGGDGCVSFRREKFIEFGGPDGGNGGNGGSVIFVASSAVNTLLYFRYNQHIRAENGKAGSGKGKFGAAGRNRVVEVPVGTQLYDEDGNTLIADLNNIGQQYTVAAGGRGGIGNAQYKSSTNRAPTYFTYGTLGEEHCVLLKLKIVSDVGIIGMPNAGKSSLLSRCTASKTKVSDYPFTTLEPHLGVAYANGCELVLADIPGLIENASSGAGLGHKFLKHIERCVILLHLVDCSLPDIVSAYELVRQELKLHSQELTGKQEVVILNKCDLLSEGEVREKQKLLESSTKKEVITLSMGDELDSLIVFLHAQVKKAVVTEPSDTSFDPFLYVHYNKK.

One can recognise an Obg domain in the interval 1–159; the sequence is MSFVDEAKIH…HCVLLKLKIV (159 aa). The 170-residue stretch at 160 to 329 folds into the OBG-type G domain; the sequence is SDVGIIGMPN…LHAQVKKAVV (170 aa). Residues 166–173, 191–195, 212–215, 279–282, and 310–312 each bind GTP; these read GMPNAGKS, FTTLE, DIPG, NKCD, and GDE. Mg(2+) is bound by residues serine 173 and threonine 193.

This sequence belongs to the TRAFAC class OBG-HflX-like GTPase superfamily. OBG GTPase family. Monomer. It depends on Mg(2+) as a cofactor.

It localises to the cytoplasm. An essential GTPase which binds GTP, GDP and possibly (p)ppGpp with moderate affinity, with high nucleotide exchange rates and a fairly low GTP hydrolysis rate. Plays a role in control of the cell cycle, stress response, ribosome biogenesis and in those bacteria that undergo differentiation, in morphogenesis control. The polypeptide is GTPase Obg 1 (Anaplasma marginale (strain Florida)).